The primary structure comprises 276 residues: Aquaporin-1 (276 aa).

Residues 1-10 lie on the Cytoplasmic side of the membrane; that stretch reads MLDAEQKKNY. A helical transmembrane segment spans residues 11 to 31; it reads VAGAFGEFVGTAYFLFMGVGG. At 32-46 the chain is on the extracellular side; the sequence is AVNFLNNAAGSPLPG. A helical transmembrane segment spans residues 47 to 67; the sequence is FAIPFCFGFSLFVNVFIWAPI. Topologically, residues 68-93 are cytoplasmic; it reads SGGVFNPSITIALMATNPKDFPWYRG. The NPA 1 motif lies at 73–75; that stretch reads NPS. The helical transmembrane segment at 94-114 threads the bilayer; the sequence is ILYIVSQFLGALFGSWLIDLI. At 115–133 the chain is on the extracellular side; sequence QPEAPNAATLLADGVSVAQ. A helical membrane pass occupies residues 134-154; the sequence is GLFMEMFATSVLTMAVLILAG. The Cytoplasmic segment spans residues 155–159; sequence ERYGK. Residues 160–180 form a helical membrane-spanning segment; it reads YLAPFGIGMSLFISALCAGPY. Over 181–204 the chain is Extracellular; that stretch reads TGASLNPARTLGPAIVANQYGRAH. Residues 186–188 carry the NPA 2 motif; sequence NPA. A helical transmembrane segment spans residues 205 to 225; it reads WIYYVGPTLGSLLAAGYWHIL. The Cytoplasmic portion of the chain corresponds to 226 to 276; sequence RILNIDVVDLKNVLNKCKKCGKEDPRISLKHCEECLKDDPKPEKYDIESQN.

The protein belongs to the MIP/aquaporin (TC 1.A.8) family.

The protein resides in the cell membrane. It catalyses the reaction H2O(in) = H2O(out). Its activity is regulated as follows. Polyethylene glycol (PEG) stimulates whereas glycerol inhibits the aquaporin activity. Its function is as follows. Water channel required to facilitate the transport of water across membranes. Stimulates plant drought tolerance by facilitating the transport of water from the arbuscular mycorrhiza fungus to host plants. This chain is Aquaporin-1, found in Rhizophagus irregularis (Arbuscular mycorrhizal fungus).